A 378-amino-acid chain; its full sequence is Erythronate-4-phosphate dehydrogenase (378 aa).

2 residues coordinate substrate: Ser-45 and Thr-66. NAD(+)-binding residues include Asp-146 and Thr-175. Residue Arg-208 is part of the active site. Residue Asp-232 coordinates NAD(+). Residue Glu-237 is part of the active site. His-254 acts as the Proton donor in catalysis. Gly-257 serves as a coordination point for NAD(+). Tyr-258 serves as a coordination point for substrate.

It belongs to the D-isomer specific 2-hydroxyacid dehydrogenase family. PdxB subfamily. As to quaternary structure, homodimer.

It is found in the cytoplasm. It catalyses the reaction 4-phospho-D-erythronate + NAD(+) = (R)-3-hydroxy-2-oxo-4-phosphooxybutanoate + NADH + H(+). The protein operates within cofactor biosynthesis; pyridoxine 5'-phosphate biosynthesis; pyridoxine 5'-phosphate from D-erythrose 4-phosphate: step 2/5. Catalyzes the oxidation of erythronate-4-phosphate to 3-hydroxy-2-oxo-4-phosphonooxybutanoate. This chain is Erythronate-4-phosphate dehydrogenase, found in Escherichia coli O17:K52:H18 (strain UMN026 / ExPEC).